The following is a 2549-amino-acid chain: Serine/threonine-protein kinase mTOR (2549 aa).

Met-1 bears the N-acetylmethionine mark. Residues 1–651 are interaction with NBN; sequence MLGTGPAAAT…HVVSQTAVQV (651 aa). HEAT repeat units lie at residues 16-53, 55-99, 100-137, 138-179, 180-220, 222-276, 277-313, 314-364, 365-409, 410-445, 446-494, 495-529, 530-563, 564-596, 597-636, 637-683, 686-724, 727-766, 769-811, 814-853, 857-893, 894-942, 943-988, 989-1027, 1029-1068, 1069-1105, 1106-1144, 1145-1188, 1189-1225, 1226-1273, 1274-1311, and 1312-1345; these read SSNVSVLQQFASGLKSRNEETRAKAAKELQHYVTMELR, MSQE…VEGG, NATRIGRFANYLRNLLPSNDPVVMEMASKAIGRLAMAG, DTFT…AISV, PTFF…LILT, QREP…RISS, MEGERLREEMEEITQQQLVHDKYCKDLMGFGTKPRHI, TPFT…CCRD, LMEE…AFTD, TQYLQDTMNHVLSCVKKEKERTAAFQALGLLSVAVR, SEFK…RAMG, PGIQQDIKELLEPMLAVGLSPALTAVLYDLSRQIP, QLKKDIQDGLLKMLSLVLMHKPLRHPGMPKGLAH, QLASPGLTTLPEASDVGSITLALRTLGSFEFEG, HSLTQFVRHCADHFLNSEHKEIRMEAARTCSRLLTPSIHL, ISGH…DERF, HLAQAENLQALFVALNDQVFEIRELAICTVGRLSSMNPA, MPFLRKMLIQILTELEHSGIGRIKEQSARMLGHLVSNAPR, RPYM…VSGL, RKWVDELFIIIMDMLQDSSLLAKRQVALWTLGQLVASTGY, PYRKYPTLLEVLLNFLKTEQNQGTRREAIRVLGLLGA, LDPY…GNLP, LDEF…KCVQ, FLPQVMPTFLNVIRVCDGAIREFLFQQLGMLVSFVKSHI, PYMDEIVTLMREFWVMNTSIQSTIILLIEQIVVALGGEFK, LYLPQLIPHMLRVFMHDNSPGRIVSIKLLAAIQLFGA, NLDDYLHLLLPPIVKLFDAPEAPLPSRKAALETVDRLTE, SLDF…GKKY, QIFIPMVNKVLVRHRINHQRYDVLICRIVKGYTLADE, EEDP…GAAR, RVSKDDWLEWLRRLSLELLKDSSSPSLRSCWALAQAYN, and PMARDLFNAAFVSCWSELNEDQQDELIRSIELAL. Phosphoserine is present on Ser-567. Thr-1162 carries the post-translational modification Phosphothreonine. Lys-1218 carries the post-translational modification N6-acetyllysine. Position 1261 is a phosphoserine (Ser-1261). TPR repeat units lie at residues 1346-1382, 1383-1408, 1409-1442, 1443-1473, 1474-1507, 1508-1541, 1542-1574, 1575-1614, 1615-1649, 1650-1693, 1694-1731, 1732-1786, 1787-1846, 1898-1930, 1931-1970, and 1971-2005; these read TSQDIAEVTQTLLNLAEFMEHSDKGPLPLRDDNGIVL, LGERAAKCRAYAKALHYKELEFQKGP, TPAILESLISINNKLQQPEAAAGVLEYAMKHFGE, LEIQATWYEKLHEWEDALVAYDKKMDTNKDD, PELMLGRMRCLEALGEWGQLHQQCCEKWTLVNDE, TQAKMARMAAAAAWGLGQWDSMEEYTCMIPRDTH, DGAFYRAVLALHQDLFSLAQQCIDKARDLLDAE, LTAMAGESYSRAYGAMVSCHMLSELEEVIQYKLVPERREI, IRQIWWERLQGCQRIVEDWQKILMVRSLVVSPHED, MRTW…PTVH, PQVTYAYMKNMWKSARKIDAFQHMQHFVQTMQQQAQHA, IATE…DRSW, YKAW…STEG, NNLQDTLRVLTLWFDYGHWPDVNEALVEGVKAI, QIDTWLQVIPQLIARIDTPRPLVGRLIHQLLTDIGRYHPQ, and ALIYPLTVASKSTTTARHNAANKILKNMCEHSNTL. Residues 1382–1982 enclose the FAT domain; sequence LLGERAAKCR…IYPLTVASKS (601 aa). The 1D-myo-inositol hexakisphosphate site is built by Lys-1662, Lys-1702, and Arg-1749. The disordered stretch occupies residues 1812–1867; it reads DEKKKLRHASGANITNATTAATTAATATTTASTEGSNSESEAESTENSPTPSPLQK. The span at 1820–1860 shows a compositional bias: low complexity; it reads ASGANITNATTAATTAATATTTASTEGSNSESEAESTENSP. The segment at 2012–2144 is sufficient for interaction with the FKBP1A/rapamycin complex; it reads VSEELIRVAI…DLELAVPGTY (133 aa). Lys-2066 participates in a covalent cross-link: Glycyl lysine isopeptide (Lys-Gly) (interchain with G-Cter in ubiquitin). A PI3K/PI4K catalytic domain is found at 2156–2469; sequence IAPSLQVITS…GVELGEPAHK (314 aa). A Phosphoserine; by TBK1 modification is found at Ser-2159. A G-loop region spans residues 2162 to 2168; sequence VITSKQR. Thr-2164 bears the Phosphothreonine mark. Residues Ser-2165 and Gln-2167 each contribute to the ATP site. Thr-2173 is subject to Phosphothreonine; by PKB/AKT1. Leu-2185, Lys-2187, Glu-2190, Tyr-2225, Gly-2238, Trp-2239, Val-2240, and Thr-2245 together coordinate ATP. Residues 2258 to 2296 form an interaction with MLST8 region; that stretch reads KILLNIEHRIMLRMAPDYDHLTLMQKVEVFEHAVNNTAG. Residues 2335–2343 are catalytic loop; sequence GLGDRHPSN. Mg(2+) is bound at residue Asn-2343. Residues Met-2345 and Ile-2356 each coordinate ATP. The activation loop stretch occupies residues 2355–2380; it reads HIDFGDCFEVAMTREKFPEKIPFRLT. Residue Asp-2357 participates in Mg(2+) binding. At Thr-2446 the chain carries Phosphothreonine; by RPS6KB1. A Phosphoserine; by RPS6KB1 modification is found at Ser-2448. Residue Ser-2478 is modified to Phosphoserine. Ser-2481 is subject to Phosphoserine; by autocatalysis. The FATC domain occupies 2517-2549; the sequence is DTLDVPTQVELLIKQATSHENLCQCYIGWCPFW.

This sequence belongs to the PI3/PI4-kinase family. In terms of assembly, part of the mechanistic target of rapamycin complex 1 (mTORC1) which contains MTOR, MLST8 and RPTOR. The mTORC1 complex is a 1 Md obligate dimer of two stoichiometric heterotetramers with overall dimensions of 290 A x 210 A x 135 A. It has a rhomboid shape and a central cavity, the dimeric interfaces are formed by interlocking interactions between the two MTOR and the two RPTOR subunits. The MLST8 subunit forms distal foot-like protuberances, and contacts only one MTOR within the complex, while the small AKT1S1/PRAS40 localizes to the midsection of the central core, in close proximity to RPTOR. mTORC1 associates with AKT1S1/PRAS40, which inhibits its activity by blocking MTOR substrate-recruitment site. Component of the mechanistic target of rapamycin complex 2 (mTORC2), consisting in two heterotretramers composed of MTOR, MLST8, RICTOR and MAPKAP1/SIN1. Interacts with PLPP7 and PML. Interacts with PRR5 and RICTOR; the interaction is direct within the mTORC2 complex and interaction with RICTOR is enhanced by deubiquitination of RICTOR by USP9X. mTORC1 and mTORC2 associate with DEPTOR, which regulates their activity. Interacts with WAC; WAC positively regulates MTOR activity by promoting the assembly of the TTT complex composed of TELO2, TTI1 and TTI2 and the RUVBL complex composed of RUVBL1 and RUVBL2 into the TTT-RUVBL complex which leads to the dimerization of the mTORC1 complex and its subsequent activation. Interacts with UBQLN1. Interacts with TTI1 and TELO2. Interacts with CLIP1; phosphorylates and regulates CLIP1. Interacts with NBN. Interacts with HTR6. Interacts with BRAT1. Interacts with MEAK7 (via C-terminal domain); the interaction increases upon nutrient stimulation. Interacts with TM4SF5; the interaction is positively regulated by arginine and is negatively regulated by leucine. Interacts with GPR137B. Interacts with NCKAP1L. Interacts with TPCN1 and TPCN2; the interaction is required for TPCN1 and TPCN2 sensitivity to ATP. Interacts with ATP6V1A and with CRYAB, forming a ternary complex. Interacts with SLC38A7; this interaction mediates the recruitment of mTORC1 to the lysosome and its subsequent activation. Interacts with TSPAN8. Post-translationally, autophosphorylates when part of mTORC1 or mTORC2. Phosphorylation at Ser-1261, Ser-2159 and Thr-2164 promotes autophosphorylation. Phosphorylated at Ser-2448 by RPS6KB1. Phosphorylation in the kinase domain modulates the interactions of MTOR with RPTOR and AKT1S1/PRAS40 and leads to increased intrinsic mTORC1 kinase activity. Phosphorylation at Ser-2159 by TBK1 in response to growth factors and pathogen recognition receptors promotes mTORC1 activity. Phosphorylation at Ser-2159 by TBK1 in response to EGF growth factor promotes mTORC2 activity, leading to AKT1 phosphorylation and activation. Phosphorylation at Thr-2173 in the ATP-binding region by AKT1 strongly reduces kinase activity. Ubiquitinated at Lys-2066 by the SCF(FBXO22) complex via 'Lys-27'-linked ubiquitination prevents mTORC1 substrate recruitment. Expressed in numerous tissues, with highest levels in testis.

It is found in the lysosome membrane. The protein resides in the endoplasmic reticulum membrane. It localises to the golgi apparatus membrane. The protein localises to the cell membrane. Its subcellular location is the mitochondrion outer membrane. It is found in the cytoplasm. The protein resides in the nucleus. It localises to the PML body. The protein localises to the microsome membrane. Its subcellular location is the cytoplasmic vesicle. It is found in the phagosome. The catalysed reaction is L-seryl-[protein] + ATP = O-phospho-L-seryl-[protein] + ADP + H(+). It catalyses the reaction L-threonyl-[protein] + ATP = O-phospho-L-threonyl-[protein] + ADP + H(+). The enzyme catalyses L-tyrosyl-[protein] + ATP = O-phospho-L-tyrosyl-[protein] + ADP + H(+). The mTORC1 complex is activated in response to nutrients, growth factors or amino acids: activation requires relocalization of the mTORC1 complex to lysosomes that is mediated by the Ragulator complex, SLC38A9, and the Rag GTPases RagA/RRAGA, RagB/RRAGB, RagC/RRAGC and RagD/RRAGD. Activation of mTORC1 by growth factors such as insulin involves AKT1-mediated phosphorylation of TSC1-TSC2, which leads to the activation of the RHEB GTPase a potent activator of the protein kinase activity of mTORC1. Insulin-stimulated and amino acid-dependent phosphorylation at Ser-1261 promotes autophosphorylation and the activation of mTORC1. On the other hand, low cellular energy levels can inhibit mTORC1 through activation of PRKAA1 while hypoxia inhibits mTORC1 through a REDD1-dependent mechanism which may also require PRKAA1. The kinase activity of MTOR within the mTORC1 complex is positively regulated by MLST8. The kinase activity of MTOR is inhibited by DEPTOR and AKT1S1. The non-canonical mTORC1 complex is independent of the RHEB GTPase and specifically mediates phosphorylation of MiT/TFE factors TFEB and TFE3 but not other mTORC1 substrates: it is activated by FLCN, which activates Rag GTPases RagC/RRAGC and RagD/RRAGD. MTOR is the target of the immunosuppressive and anti-cancer drug rapamycin which acts in complex with FKBP1A/FKBP12, and specifically inhibits its kinase activity. mTORC2 is also activated by growth factors, but seems to be nutrient-insensitive. mTORC2 associates and is directly activated by ribosomes. mTORC2 may also be regulated by RHEB but in an indirect manner through the PI3K signaling pathway. Serine/threonine protein kinase which is a central regulator of cellular metabolism, growth and survival in response to hormones, growth factors, nutrients, energy and stress signals. MTOR directly or indirectly regulates the phosphorylation of at least 800 proteins. Functions as part of 2 structurally and functionally distinct signaling complexes mTORC1 and mTORC2 (mTOR complex 1 and 2). In response to nutrients, growth factors or amino acids, mTORC1 is recruited to the lysosome membrane and promotes protein, lipid and nucleotide synthesis by phosphorylating key regulators of mRNA translation and ribosome synthesis. This includes phosphorylation of EIF4EBP1 and release of its inhibition toward the elongation initiation factor 4E (eiF4E). Moreover, phosphorylates and activates RPS6KB1 and RPS6KB2 that promote protein synthesis by modulating the activity of their downstream targets including ribosomal protein S6, eukaryotic translation initiation factor EIF4B, and the inhibitor of translation initiation PDCD4. Stimulates the pyrimidine biosynthesis pathway, both by acute regulation through RPS6KB1-mediated phosphorylation of the biosynthetic enzyme CAD, and delayed regulation, through transcriptional enhancement of the pentose phosphate pathway which produces 5-phosphoribosyl-1-pyrophosphate (PRPP), an allosteric activator of CAD at a later step in synthesis, this function is dependent on the mTORC1 complex. Regulates ribosome synthesis by activating RNA polymerase III-dependent transcription through phosphorylation and inhibition of MAF1 an RNA polymerase III-repressor. Activates dormant ribosomes by mediating phosphorylation of SERBP1, leading to SERBP1 inactivation and reactivation of translation. In parallel to protein synthesis, also regulates lipid synthesis through SREBF1/SREBP1 and LPIN1. To maintain energy homeostasis mTORC1 may also regulate mitochondrial biogenesis through regulation of PPARGC1A. In the same time, mTORC1 inhibits catabolic pathways: negatively regulates autophagy through phosphorylation of ULK1. Under nutrient sufficiency, phosphorylates ULK1 at 'Ser-758', disrupting the interaction with AMPK and preventing activation of ULK1. Also prevents autophagy through phosphorylation of the autophagy inhibitor DAP. Also prevents autophagy by phosphorylating RUBCNL/Pacer under nutrient-rich conditions. Prevents autophagy by mediating phosphorylation of AMBRA1, thereby inhibiting AMBRA1 ability to mediate ubiquitination of ULK1 and interaction between AMBRA1 and PPP2CA. mTORC1 exerts a feedback control on upstream growth factor signaling that includes phosphorylation and activation of GRB10 a INSR-dependent signaling suppressor. Among other potential targets mTORC1 may phosphorylate CLIP1 and regulate microtubules. The mTORC1 complex is inhibited in response to starvation and amino acid depletion. The non-canonical mTORC1 complex, which acts independently of RHEB, specifically mediates phosphorylation of MiT/TFE factors MITF, TFEB and TFE3 in the presence of nutrients, promoting their cytosolic retention and inactivation. Upon starvation or lysosomal stress, inhibition of mTORC1 induces dephosphorylation and nuclear translocation of TFEB and TFE3, promoting their transcription factor activity. The mTORC1 complex regulates pyroptosis in macrophages by promoting GSDMD oligomerization. MTOR phosphorylates RPTOR which in turn inhibits mTORC1. As part of the mTORC2 complex, MTOR transduces signals from growth factors to pathways involved in proliferation, cytoskeletal organization, lipogenesis and anabolic output. In response to growth factors, mTORC2 phosphorylates and activates AGC protein kinase family members, including AKT (AKT1, AKT2 and AKT3), PKC (PRKCA, PRKCB and PRKCE) and SGK1. In contrast to mTORC1, mTORC2 is nutrient-insensitive. mTORC2 plays a critical role in AKT1 activation by mediating phosphorylation of different sites depending on the context, such as 'Thr-450', 'Ser-473', 'Ser-477' or 'Thr-479', facilitating the phosphorylation of the activation loop of AKT1 on 'Thr-308' by PDPK1/PDK1 which is a prerequisite for full activation. mTORC2 also regulates the phosphorylation of SGK1 at 'Ser-422'. mTORC2 may regulate the actin cytoskeleton, through phosphorylation of PRKCA, PXN and activation of the Rho-type guanine nucleotide exchange factors RHOA and RAC1A or RAC1B. The mTORC2 complex also phosphorylates various proteins involved in insulin signaling, such as FBXW8 and IGF2BP1. May also regulate insulin signaling by acting as a tyrosine protein kinase that catalyzes phosphorylation of IGF1R and INSR; additional evidence are however required to confirm this result in vivo. Regulates osteoclastogenesis by adjusting the expression of CEBPB isoforms. Plays an important regulatory role in the circadian clock function; regulates period length and rhythm amplitude of the suprachiasmatic nucleus (SCN) and liver clocks. In Homo sapiens (Human), this protein is Serine/threonine-protein kinase mTOR.